We begin with the raw amino-acid sequence, 308 residues long: Transcriptional adapter 1-1 (308 aa).

This sequence belongs to the TADA1 family. In terms of assembly, component of the Spt-Ada-Gcn5 acetyltransferase (SAGA) complex consisting of wda/Taf5L, Saf6, Taf9, Taf10b, Taf12, Ada1, Spt3, Spt7, Spt20, Sf3b3, Sf3b5, Nipped-A/Tra1, a histone acetyltransferase (HAT) module made up of Gcn5, Ada2b (Isoform B), Ada3 and Sgf29, and a deubiquitinase (DUB) module made up of not/nonstop, Sgf11 and e(y)2 tethered to SAGA by Atxn7. Not a component of the Ada2a-containing ATAC complex.

It localises to the nucleus. Functionally, component of the transcription regulatory complex SAGA, a multiprotein complex that activates transcription by remodeling chromatin and mediating histone acetylation and deubiquitination. The SAGA complex predominantly acetylates histone H3. This Drosophila melanogaster (Fruit fly) protein is Transcriptional adapter 1-1.